A 322-amino-acid chain; its full sequence is Undecaprenyl-phosphate 4-deoxy-4-formamido-L-arabinose transferase (322 aa).

Topologically, residues 1 to 235 are cytoplasmic; that stretch reads MFEIHPVKKV…TCLTTTPLRM (235 aa). A helical transmembrane segment spans residues 236–256; sequence LSLLGSIIAIGGFSIAVLLVI. At 257–269 the chain is on the periplasmic side; it reads LRLTFGPQWAAEG. The chain crosses the membrane as a helical span at residues 270–290; that stretch reads VFMLFAVLFTFIGAQFIGMGL. The Cytoplasmic segment spans residues 291–322; that stretch reads LGEYIGRIYTDVRARPRYFVQQVIRPSSKENE.

This sequence belongs to the glycosyltransferase 2 family.

Its subcellular location is the cell inner membrane. The enzyme catalyses UDP-4-deoxy-4-formamido-beta-L-arabinose + di-trans,octa-cis-undecaprenyl phosphate = 4-deoxy-4-formamido-alpha-L-arabinopyranosyl di-trans,octa-cis-undecaprenyl phosphate + UDP. It participates in glycolipid biosynthesis; 4-amino-4-deoxy-alpha-L-arabinose undecaprenyl phosphate biosynthesis; 4-amino-4-deoxy-alpha-L-arabinose undecaprenyl phosphate from UDP-4-deoxy-4-formamido-beta-L-arabinose and undecaprenyl phosphate: step 1/2. Its pathway is bacterial outer membrane biogenesis; lipopolysaccharide biosynthesis. Functionally, catalyzes the transfer of 4-deoxy-4-formamido-L-arabinose from UDP to undecaprenyl phosphate. The modified arabinose is attached to lipid A and is required for resistance to polymyxin and cationic antimicrobial peptides. This chain is Undecaprenyl-phosphate 4-deoxy-4-formamido-L-arabinose transferase, found in Escherichia coli O7:K1 (strain IAI39 / ExPEC).